A 195-amino-acid chain; its full sequence is Imidazoleglycerol-phosphate dehydratase (195 aa).

Belongs to the imidazoleglycerol-phosphate dehydratase family.

It localises to the cytoplasm. It carries out the reaction D-erythro-1-(imidazol-4-yl)glycerol 3-phosphate = 3-(imidazol-4-yl)-2-oxopropyl phosphate + H2O. Its pathway is amino-acid biosynthesis; L-histidine biosynthesis; L-histidine from 5-phospho-alpha-D-ribose 1-diphosphate: step 6/9. The chain is Imidazoleglycerol-phosphate dehydratase from Burkholderia cenocepacia (strain HI2424).